The sequence spans 298 residues: Zinc import ATP-binding protein ZnuC (298 aa).

One can recognise an ABC transporter domain in the interval 17 to 232 (IELRNAGVYR…PEYVRLFGSR (216 aa)). 49–56 (GPNGAGKS) is an ATP binding site. Residues 273–298 (RGHCHVEDGHHHDHEHHHHEGGQPRA) form a disordered region. Positions 276–298 (CHVEDGHHHDHEHHHHEGGQPRA) are enriched in basic and acidic residues.

This sequence belongs to the ABC transporter superfamily. Zinc importer (TC 3.A.1.15.5) family. As to quaternary structure, the complex is composed of two ATP-binding proteins (ZnuC), two transmembrane proteins (ZnuB) and a solute-binding protein (ZnuA).

It is found in the cell inner membrane. The catalysed reaction is Zn(2+)(out) + ATP(in) + H2O(in) = Zn(2+)(in) + ADP(in) + phosphate(in) + H(+)(in). Its function is as follows. Part of the ABC transporter complex ZnuABC involved in zinc import. Responsible for energy coupling to the transport system. The polypeptide is Zinc import ATP-binding protein ZnuC (Brucella abortus (strain 2308)).